The sequence spans 531 residues: Transcription factor LG2 (531 aa).

2 disordered regions span residues 115–154 (RHQQ…ASSA) and 195–220 (LHGG…KLVD). The span at 116-154 (HQQQLHSGNSQSVGSTGTDSSSAQNTMSQMELVSPASSA) shows a compositional bias: polar residues. Positions 220 to 264 (DAKTERRLAQNREAARKSRLRKKAYVQQLETSRIRLQQVEHELQR) constitute a bZIP domain. The segment at 222–242 (KTERRLAQNREAARKSRLRKK) is basic motif. Residues 224–231 (ERRLAQNR) carry the Nuclear localization signal motif. A leucine-zipper region spans residues 248–262 (LETSRIRLQQVEHEL). The DOG1 domain occupies 285–499 (AAMFDMEYAR…RALSNLWASR (215 aa)).

It belongs to the bZIP family. Binds DNA as a dimer. In terms of tissue distribution, expression in meristem/developing ligule regions.

It localises to the nucleus. Its function is as follows. Required for the formation of the blade-sheath boundary in leaves. Promotes flowering. The chain is Transcription factor LG2 from Zea mays (Maize).